The following is a 255-amino-acid chain: UPF0246 protein Caul_4480 (255 aa).

The protein belongs to the UPF0246 family.

The protein is UPF0246 protein Caul_4480 of Caulobacter sp. (strain K31).